The chain runs to 1038 residues: Kinesin-like protein KIF17 (1038 aa).

A Kinesin motor domain is found at 5 to 335 (SVKVVVRCRP…LRYANRAKNI (331 aa)). 91-98 (GQTGSGKS) lines the ATP pocket. Positions 346–470 (KDALLREYQE…ETEAILKAEV (125 aa)) form a coiled coil. 3 disordered regions span residues 379–401 (TQTP…VQQD), 503–559 (LSMP…GPEE), and 636–657 (DSSQ…LLEP). Polar residues-rich tracts occupy residues 533–551 (SEFS…SATS) and 636–651 (DSSQ…QPSS). A coiled-coil region spans residues 748–855 (QQVLARLQLL…QLEKIDYLAT (108 aa)). Disordered stretches follow at residues 916-940 (VVPT…PHMQ) and 976-1038 (MKSL…GEPL). The span at 983 to 1000 (NSPPGLNSSLSNNSALPP) shows a compositional bias: low complexity.

This sequence belongs to the TRAFAC class myosin-kinesin ATPase superfamily. Kinesin family. Homodimer. Interacts with APBA1 (via PDZ domain); the interaction is direct and is required for association of KIF17 with the cargo that is to be transported. Interacts with IFT B complex components IFT52 and IFT57. Interacts with IFT70B. Interacts with PIWIL1. Interacts with TBATA. As to expression, highly expressed in the gray matter of the brain, especially in the hippocampus.

The protein localises to the cytoplasm. It is found in the cytoskeleton. Its subcellular location is the cell projection. The protein resides in the cilium. It localises to the dendrite. Its function is as follows. Dendrite-specific motor protein which, in association with the Apba1-containing complex (LIN-10-LIN-2-LIN-7 complex), transports vesicles containing N-methyl-D-aspartate (NMDA) receptor subunit NR2B along microtubules. In Mus musculus (Mouse), this protein is Kinesin-like protein KIF17 (Kif17).